Consider the following 267-residue polypeptide: Thiamine pyrophosphokinase 3 (267 aa).

It belongs to the thiamine pyrophosphokinase family.

It localises to the cytoplasm. It is found in the cytosol. The catalysed reaction is thiamine + ATP = thiamine diphosphate + AMP + H(+). It participates in cofactor biosynthesis; thiamine diphosphate biosynthesis; thiamine diphosphate from thiamine: step 1/1. In terms of biological role, catalyzes the phosphorylation of thiamine to thiamine pyrophosphate (TPP). TPP is an active cofactor for enzymes involved in glycolysis and energy production. Plant leaves require high levels of TPP for photosynthesis and carbohydrate metabolism. This chain is Thiamine pyrophosphokinase 3 (TPK3), found in Oryza sativa subsp. japonica (Rice).